The chain runs to 182 residues: Ribosome-recycling factor (182 aa).

Residues 136-156 (VKKQEKDGDFSEDQSRDEQDS) are disordered.

This sequence belongs to the RRF family.

It is found in the cytoplasm. Functionally, responsible for the release of ribosomes from messenger RNA at the termination of protein biosynthesis. May increase the efficiency of translation by recycling ribosomes from one round of translation to another. This is Ribosome-recycling factor from Synechococcus sp. (strain CC9902).